The chain runs to 273 residues: Translation initiation factor 2 subunit alpha (273 aa).

Residues 12-83 (GEFVVATVKN…EKGHIDLSLK (72 aa)) enclose the S1 motif domain.

Belongs to the eIF-2-alpha family. As to quaternary structure, heterotrimer composed of an alpha, a beta and a gamma chain.

Its function is as follows. eIF-2 functions in the early steps of protein synthesis by forming a ternary complex with GTP and initiator tRNA. The polypeptide is Translation initiation factor 2 subunit alpha (Thermococcus gammatolerans (strain DSM 15229 / JCM 11827 / EJ3)).